The primary structure comprises 329 residues: DNA-directed RNA polymerase subunit alpha (329 aa).

Positions 1–235 (MQGSVTEFLK…EQLEAFVDLR (235 aa)) are alpha N-terminal domain (alpha-NTD). The tract at residues 249-329 (FDPILLRPVD…NWPPASIADE (81 aa)) is alpha C-terminal domain (alpha-CTD).

It belongs to the RNA polymerase alpha chain family. In terms of assembly, homodimer. The RNAP catalytic core consists of 2 alpha, 1 beta, 1 beta' and 1 omega subunit. When a sigma factor is associated with the core the holoenzyme is formed, which can initiate transcription.

The enzyme catalyses RNA(n) + a ribonucleoside 5'-triphosphate = RNA(n+1) + diphosphate. Functionally, DNA-dependent RNA polymerase catalyzes the transcription of DNA into RNA using the four ribonucleoside triphosphates as substrates. The sequence is that of DNA-directed RNA polymerase subunit alpha from Shigella dysenteriae serotype 1 (strain Sd197).